Here is a 322-residue protein sequence, read N- to C-terminus: Ferredoxin--NADP reductase (322 aa).

FAD-binding residues include aspartate 34, glutamine 42, tyrosine 47, valine 87, phenylalanine 120, aspartate 279, and threonine 320.

This sequence belongs to the ferredoxin--NADP reductase type 2 family. As to quaternary structure, homodimer. Requires FAD as cofactor.

The enzyme catalyses 2 reduced [2Fe-2S]-[ferredoxin] + NADP(+) + H(+) = 2 oxidized [2Fe-2S]-[ferredoxin] + NADPH. The protein is Ferredoxin--NADP reductase of Streptococcus pneumoniae (strain Hungary19A-6).